Reading from the N-terminus, the 103-residue chain is ATP synthase subunit H, mitochondrial (103 aa).

The transit peptide at 1–26 (MSRILKSLSRSYSTTSPRLYVDVVQG) directs the protein to the mitochondrion.

It belongs to the ATPase h subunit family. F-type ATPases have 2 components, CF(1) - the catalytic core - and CF(0) - the membrane proton channel.

Its subcellular location is the mitochondrion. The protein resides in the mitochondrion inner membrane. In terms of biological role, mitochondrial membrane ATP synthase (F(1)F(0) ATP synthase or Complex V) produces ATP from ADP in the presence of a proton gradient across the membrane which is generated by electron transport complexes of the respiratory chain. F-type ATPases consist of two structural domains, F(1) - containing the extramembraneous catalytic core and F(0) - containing the membrane proton channel, linked together by a central stalk and a peripheral stalk. During catalysis, ATP synthesis in the catalytic domain of F(1) is coupled via a rotary mechanism of the central stalk subunits to proton translocation. Part of the complex F(0) domain. Minor subunit located with subunit a in the membrane. This Schizosaccharomyces pombe (strain 972 / ATCC 24843) (Fission yeast) protein is ATP synthase subunit H, mitochondrial (atp14).